Here is an 85-residue protein sequence, read N- to C-terminus: MKQGIHPDYHKVIFLDSTTDFKFLSGSTRTSSETMTWEDGNEYPVIRLDISSDSHPFYTGRQKFASADGRVERFNKKFGFKSSNE.

This sequence belongs to the bacterial ribosomal protein bL31 family. Type B subfamily. Part of the 50S ribosomal subunit.

This is Large ribosomal subunit protein bL31B from Macrococcus caseolyticus (strain JCSC5402) (Macrococcoides caseolyticum).